We begin with the raw amino-acid sequence, 117 residues long: Large ribosomal subunit protein bL20 (117 aa).

Belongs to the bacterial ribosomal protein bL20 family.

In terms of biological role, binds directly to 23S ribosomal RNA and is necessary for the in vitro assembly process of the 50S ribosomal subunit. It is not involved in the protein synthesizing functions of that subunit. The polypeptide is Large ribosomal subunit protein bL20 (Brachyspira hyodysenteriae (strain ATCC 49526 / WA1)).